Reading from the N-terminus, the 569-residue chain is Endonuclease/exonuclease/phosphatase family domain-containing protein 1 (569 aa).

Gly2 is lipidated: N-myristoyl glycine. Residues Ser16 and Ser25 each carry the phosphoserine modification. One can recognise a HhH domain in the interval 38–67; sequence ERLNINTATEEELMTLPGVTRAVARSIVEY. Ser106, Ser110, Ser160, and Ser173 each carry phosphoserine. A disordered region spans residues 200-224; the sequence is SRPPSTHTNGGLTFTAKPHPSPTSL. Residues 202-211 show a composition bias toward polar residues; it reads PPSTHTNGGL. The residue at position 265 (Thr265) is a Phosphothreonine. The interval 549-569 is disordered; the sequence is VPRNGNGVTLEPSEANIKHER.

This chain is Endonuclease/exonuclease/phosphatase family domain-containing protein 1 (Eepd1), found in Mus musculus (Mouse).